The sequence spans 506 residues: ATP-dependent rRNA helicase RRP3 (506 aa).

Disordered regions lie at residues 1–22 (MSGKVDKKKGSSVKKTEGKSKE) and 37–88 (NQKK…FESF). Over residues 49–69 (SDQEDDPSESEEEEGSDSEDV) the composition is skewed to acidic residues. Residues 86–114 (ESFSDLDLVPELIEACKNLNFAKPTPIQA) carry the Q motif motif. In terms of domain architecture, Helicase ATP-binding spans 117-289 (IPPALQGHDI…RASLTNPVKC (173 aa)). 130–137 (AQTGSGKT) is a binding site for ATP. Positions 236–239 (DEAD) match the DEAD box motif. A Helicase C-terminal domain is found at 312 to 460 (LKNTYLIYLM…KENVNKDAIL (149 aa)). Positions 485 to 506 (IARGKGRRGRMAARDDMDKGER) are disordered. Positions 496 to 506 (AARDDMDKGER) are enriched in basic and acidic residues.

The protein belongs to the DEAD box helicase family. DDX47/RRP3 subfamily. Interacts with the SSU processome.

The protein resides in the nucleus. It catalyses the reaction ATP + H2O = ADP + phosphate + H(+). ATP-dependent rRNA helicase required for pre-ribosomal RNA processing. Involved in the maturation of the 35S-pre-rRNA and to its cleavage to mature 18S rRNA. This is ATP-dependent rRNA helicase RRP3 from Vanderwaltozyma polyspora (strain ATCC 22028 / DSM 70294 / BCRC 21397 / CBS 2163 / NBRC 10782 / NRRL Y-8283 / UCD 57-17) (Kluyveromyces polysporus).